The sequence spans 185 residues: Prorelaxin (185 aa).

Positions 1 to 24 (MPRLFLFHLLGVCLLLNQFSRAVA) are cleaved as a signal peptide. Cystine bridges form between Cys35/Cys172, Cys47/Cys185, and Cys171/Cys176. The propeptide at 56-157 (SLNQEDAPLK…LRSLGLDTHS (102 aa)) is connecting peptide.

The protein belongs to the insulin family. In terms of assembly, heterodimer of a B chain and an A chain linked by two disulfide bonds.

The protein localises to the secreted. Relaxin is an ovarian hormone that acts with estrogen to produce dilatation of the birth canal in many mammals. May be involved in remodeling of connective tissues during pregnancy, promoting growth of pubic ligaments and ripening of the cervix. The chain is Prorelaxin (RLN) from Macaca mulatta (Rhesus macaque).